The sequence spans 285 residues: MASLGHPATFGRATHVVVRALPESLAQQALRRTKGDEVDFARAERQHQLYVGVLGSKLGLQVVQLPADESLPDCVFVEDVAVVCEETALITRPGAPSRRKEADMMKEALEKLQLNIVEMKDENATLDGGDVLFTGREFFVGLSKRTNQRGAEILADTFKDYAVSTVPVVDALHLKSFCSMAGPNLIAIGSSESAQKALKIMQQMSDHRYDKLTVPDDTAANCIYLNIPSKGHVLLHRTPEEYPESAKVYEKLKDHMLIPVSNSELEKVDGLLTCSSVLINKKVDS.

Ala2 carries the post-translational modification N-acetylalanine. Substrate is bound by residues Leu30, Asp73, Glu78, Asp79, Arg98, and Arg145. His173 acts as the Proton donor in catalysis. Position 222 is an S-nitrosocysteine (Cys222). Val268 is a substrate binding site. Cys274 carries the S-nitrosocysteine modification. Residue Cys274 is the Nucleophile of the active site. Residue Cys274 coordinates Zn(2+).

As to quaternary structure, monomer. Widely distributed, highest concentrations found in brain, brain cortex and kidney (at protein level).

The catalysed reaction is N(omega),N(omega)-dimethyl-L-arginine + H2O = dimethylamine + L-citrulline. It carries out the reaction N(omega)-methyl-L-arginine + H2O = L-citrulline + methylamine. With respect to regulation, copurifies with a tightly bound zinc ion. Activated by release of zinc. His and other agents that promote the release of bound zinc ions activate the enzyme (in vitro). Inhibited by S-nitrosylation. Zinc protects the protein against S-nitrosylation. In terms of biological role, hydrolyzes N(G),N(G)-dimethyl-L-arginine (ADMA) and N(G)-monomethyl-L-arginine (MMA) which act as inhibitors of NOS. Has therefore a role in the regulation of nitric oxide generation. The sequence is that of N(G),N(G)-dimethylarginine dimethylaminohydrolase 1 (DDAH1) from Bos taurus (Bovine).